A 127-amino-acid chain; its full sequence is ATP synthase epsilon chain (127 aa).

The protein belongs to the ATPase epsilon chain family. As to quaternary structure, F-type ATPases have 2 components, CF(1) - the catalytic core - and CF(0) - the membrane proton channel. CF(1) has five subunits: alpha(3), beta(3), gamma(1), delta(1), epsilon(1). CF(0) has three main subunits: a, b and c.

It localises to the cell inner membrane. In terms of biological role, produces ATP from ADP in the presence of a proton gradient across the membrane. The sequence is that of ATP synthase epsilon chain from Leptospira interrogans serogroup Icterohaemorrhagiae serovar copenhageni (strain Fiocruz L1-130).